A 100-amino-acid chain; its full sequence is Putative sodium channel toxin Ts26 (100 aa).

Positions Met1 to Ser22 are cleaved as a signal peptide. One can recognise an LCN-type CS-alpha/beta domain in the interval Arg24–Glu92. Cystine bridges form between Cys38/Cys64, Cys50/Cys69, Cys54/Cys71, and Cys65/Cys91.

The protein belongs to the long (4 C-C) scorpion toxin superfamily. Sodium channel inhibitor family. As to expression, expressed by the venom gland.

Its subcellular location is the secreted. In terms of biological role, putative sodium channel toxin. This is Putative sodium channel toxin Ts26 from Tityus serrulatus (Brazilian scorpion).